The primary structure comprises 537 residues: Chaperonin GroEL (537 aa).

ATP is bound by residues 29 to 32, 86 to 90, Gly-413, 477 to 479, and Asp-493; these read TLGP, DGTTT, and NAA.

It belongs to the chaperonin (HSP60) family. In terms of assembly, forms a cylinder of 14 subunits composed of two heptameric rings stacked back-to-back. Interacts with the co-chaperonin GroES.

The protein resides in the cytoplasm. The enzyme catalyses ATP + H2O + a folded polypeptide = ADP + phosphate + an unfolded polypeptide.. Its function is as follows. Together with its co-chaperonin GroES, plays an essential role in assisting protein folding. The GroEL-GroES system forms a nano-cage that allows encapsulation of the non-native substrate proteins and provides a physical environment optimized to promote and accelerate protein folding. The protein is Chaperonin GroEL of Bifidobacterium animalis subsp. lactis (strain AD011).